We begin with the raw amino-acid sequence, 164 residues long: Galectin-3 (164 aa).

The region spanning 9–154 (STVDLSEPLK…FSDVLGVTVL (146 aa)) is the Galectin domain. 6 residues coordinate a carbohydrate: Asn45, Arg64, Asn73, Arg81, Glu84, and Asn138.

As to quaternary structure, homotetramer. Oligomerization is required for carbohydrate binding.

It is found in the secreted. The protein localises to the extracellular space. It localises to the extracellular matrix. The protein resides in the cell wall. Binds complex carbohydrates, such as chitooligosaccharides. Does not bind lactose. May play a role in fruiting body formation. This Coprinopsis cinerea (Inky cap fungus) protein is Galectin-3 (Cgl3).